The sequence spans 210 residues: Thymidylate kinase (210 aa).

Residue 11–18 (GLEGAGKS) coordinates ATP.

This sequence belongs to the thymidylate kinase family.

It carries out the reaction dTMP + ATP = dTDP + ADP. Phosphorylation of dTMP to form dTDP in both de novo and salvage pathways of dTTP synthesis. The protein is Thymidylate kinase of Vibrio parahaemolyticus serotype O3:K6 (strain RIMD 2210633).